A 102-amino-acid chain; its full sequence is Small ribosomal subunit protein uS10 (102 aa).

It belongs to the universal ribosomal protein uS10 family. Part of the 30S ribosomal subunit.

Functionally, involved in the binding of tRNA to the ribosomes. The chain is Small ribosomal subunit protein uS10 from Gluconobacter oxydans (strain 621H) (Gluconobacter suboxydans).